The following is a 146-amino-acid chain: Hemoglobin subunit beta (146 aa).

The region spanning 2 to 146 (PFSAHEEKLI…VAAALSAEYH (145 aa)) is the Globin domain. Positions 63 and 92 each coordinate heme b.

Belongs to the globin family. Heterotetramer of two alpha chains and two beta chains. As to expression, red blood cells.

Its function is as follows. Involved in oxygen transport from the lung to the various peripheral tissues. This chain is Hemoglobin subunit beta (HBB), found in Caiman crocodilus (Spectacled caiman).